We begin with the raw amino-acid sequence, 426 residues long: Diaminobutyrate--2-oxoglutarate transaminase (426 aa).

K272 is subject to N6-(pyridoxal phosphate)lysine.

This sequence belongs to the class-III pyridoxal-phosphate-dependent aminotransferase family. It depends on pyridoxal 5'-phosphate as a cofactor.

The catalysed reaction is L-2,4-diaminobutanoate + 2-oxoglutarate = L-aspartate 4-semialdehyde + L-glutamate. The protein operates within amine and polyamine biosynthesis; ectoine biosynthesis; L-ectoine from L-aspartate 4-semialdehyde: step 1/3. Its function is as follows. Catalyzes reversively the conversion of L-aspartate beta-semialdehyde (ASA) to L-2,4-diaminobutyrate (DABA) by transamination with L-glutamate. This Sporosarcina pasteurii (Bacillus pasteurii) protein is Diaminobutyrate--2-oxoglutarate transaminase (ectB).